We begin with the raw amino-acid sequence, 205 residues long: Thiamine-phosphate synthase (205 aa).

4-amino-2-methyl-5-(diphosphooxymethyl)pyrimidine-binding positions include 35–39 (QYRDK) and N67. 2 residues coordinate Mg(2+): D68 and D86. A 4-amino-2-methyl-5-(diphosphooxymethyl)pyrimidine-binding site is contributed by T105. 132 to 134 (SLT) provides a ligand contact to 2-[(2R,5Z)-2-carboxy-4-methylthiazol-5(2H)-ylidene]ethyl phosphate. K135 contacts 4-amino-2-methyl-5-(diphosphooxymethyl)pyrimidine. G162 contacts 2-[(2R,5Z)-2-carboxy-4-methylthiazol-5(2H)-ylidene]ethyl phosphate.

This sequence belongs to the thiamine-phosphate synthase family. Requires Mg(2+) as cofactor.

It catalyses the reaction 2-[(2R,5Z)-2-carboxy-4-methylthiazol-5(2H)-ylidene]ethyl phosphate + 4-amino-2-methyl-5-(diphosphooxymethyl)pyrimidine + 2 H(+) = thiamine phosphate + CO2 + diphosphate. It carries out the reaction 2-(2-carboxy-4-methylthiazol-5-yl)ethyl phosphate + 4-amino-2-methyl-5-(diphosphooxymethyl)pyrimidine + 2 H(+) = thiamine phosphate + CO2 + diphosphate. The catalysed reaction is 4-methyl-5-(2-phosphooxyethyl)-thiazole + 4-amino-2-methyl-5-(diphosphooxymethyl)pyrimidine + H(+) = thiamine phosphate + diphosphate. It functions in the pathway cofactor biosynthesis; thiamine diphosphate biosynthesis; thiamine phosphate from 4-amino-2-methyl-5-diphosphomethylpyrimidine and 4-methyl-5-(2-phosphoethyl)-thiazole: step 1/1. In terms of biological role, condenses 4-methyl-5-(beta-hydroxyethyl)thiazole monophosphate (THZ-P) and 2-methyl-4-amino-5-hydroxymethyl pyrimidine pyrophosphate (HMP-PP) to form thiamine monophosphate (TMP). This is Thiamine-phosphate synthase from Pseudomonas savastanoi pv. phaseolicola (strain 1448A / Race 6) (Pseudomonas syringae pv. phaseolicola (strain 1448A / Race 6)).